Reading from the N-terminus, the 518-residue chain is Protein PAC2 (518 aa).

The CAP-Gly domain maps to 23–67; it reads VIKPWPSVKAYGVEWDDHSRGKHSGTIDDIHYFDVQIPNSGSFLK. LRR repeat units lie at residues 153 to 174, 179 to 201, 204 to 227, 229 to 252, 255 to 276, 277 to 298, 299 to 319, and 324 to 345; these read NVKDLDLSLNLFTNINSLCEFI, NLESLNISQNKLLSGWDNLKEYD, HIKTLRLSSCGLSYKHIGKLLKSF, TLKMLDLSYNNLTSAGIQNFENEI, TLEELNISGNNLISFPLFPKNL, TLKGLNVSNNQISRAPSIAIYS, VESLDITDNKFKERSLIDDLN, and SLKNIHLSGNEFNYNGNYINVE.

Its subcellular location is the cytoplasm. The protein resides in the cytoskeleton. Its function is as follows. Required for viability in the absence of the kinesin-related CIN8 mitotic motor. Seems to be involved in the assembly of alpha-tubulin. This chain is Protein PAC2 (PAC2), found in Saccharomyces cerevisiae (strain ATCC 204508 / S288c) (Baker's yeast).